The following is a 665-amino-acid chain: Anaphase-promoting complex subunit 3 (665 aa).

The TPR 1 repeat unit spans residues 115-148 (SCMLDVLGTMYKKAGFLKKATDCFVEAVSINPYN). A DNA-binding region spans residues 191-257 (VPEPSFLKKS…HQSLKLQSQS (67 aa)). TPR repeat units follow at residues 329-362 (LLKL…QQNT), 363-396 (PFVL…SPSR), 431-464 (PESW…DPTF), 466-498 (YAYT…NVRH), 499-532 (YNAW…NPNN), 534-566 (VLIT…DEKS), 568-600 (LARF…APDE), and 601-634 (ANVH…DGKA).

It belongs to the APC3/CDC27 family. In terms of assembly, the APC/C is composed of at least 13 subunits: apc1, apc2, nuc2, apc4, apc5, cut9, apc8, apc10, apc11, hcn1, apc13, apc14 and apc15. Interacts with apc10 and cut9.

The protein localises to the nucleus. Its function is as follows. Component of the anaphase-promoting complex/cyclosome (APC/C), a cell cycle-regulated E3 ubiquitin-protein ligase complex that controls progression through mitosis and the G1 phase of the cell cycle. The APC/C is thought to confer substrate specificity and, in the presence of ubiquitin-conjugating E2 enzymes, it catalyzes the formation of protein-ubiquitin conjugates that are subsequently degraded by the 26S proteasome. Interacts with spindle apparatus, chromosomes, or nuclear envelope, and interconnect nuclear and cytoskeletal functions in mitosis, so the elongation of the spindle in anaphase is blocked. The protein is Anaphase-promoting complex subunit 3 (nuc2) of Schizosaccharomyces pombe (strain 972 / ATCC 24843) (Fission yeast).